Reading from the N-terminus, the 117-residue chain is Hainantoxin-XV-3 (117 aa).

An N-terminal signal peptide occupies residues 1–20; the sequence is MKLCAVIIASLLVCVAVASS. The disordered stretch occupies residues 20–55; sequence SSDNQKEFAQEKEMTREETQSLGEHEKDDEVTGSEE. Positions 21–56 are excised as a propeptide; sequence SDNQKEFAQEKEMTREETQSLGEHEKDDEVTGSEER. The span at 23–55 shows a compositional bias: basic and acidic residues; it reads NQKEFAQEKEMTREETQSLGEHEKDDEVTGSEE. 4 cysteine pairs are disulfide-bonded: Cys-58–Cys-72, Cys-65–Cys-78, Cys-69–Cys-115, and Cys-71–Cys-91.

The protein belongs to the neurotoxin 03 (Tx2) family. 02 subfamily. HNTX-XV sub-subfamily. As to expression, expressed by the venom gland.

The protein localises to the secreted. In terms of biological role, putative ion channel inhibitor. This chain is Hainantoxin-XV-3, found in Cyriopagopus hainanus (Chinese bird spider).